The sequence spans 404 residues: Propionate kinase PduW (404 aa).

The protein belongs to the acetokinase family. PduW subfamily.

The protein resides in the cytoplasm. The enzyme catalyses propanoate + ATP = propanoyl phosphate + ADP. The protein operates within polyol metabolism; 1,2-propanediol degradation. Its pathway is organic acid metabolism; propanoate degradation. Works with phosphate acetyltransferase (pta) to capture exogenous propionate and regenerate propionyl-CoA during degradation of propionate and 1,2-propanediol (1,2-PD). Ectopic expression partially complements a cobB deletion allowing some growth on propionate. Restores growth to an eutQ deletion on ethanolamine and tetrathionate under anoxic conditions. The protein is Propionate kinase PduW of Salmonella typhimurium (strain LT2 / SGSC1412 / ATCC 700720).